The chain runs to 299 residues: GTPase Era (299 aa).

Residues 5–172 enclose the Era-type G domain; it reads KSGFVSIIGR…IDVLKSFLPE (168 aa). The segment at 13–20 is G1; the sequence is GRPNVGKS. 13-20 serves as a coordination point for GTP; that stretch reads GRPNVGKS. The segment at 39 to 43 is G2; it reads QTTRN. The segment at 60-63 is G3; it reads DTPG. GTP is bound by residues 60 to 64 and 122 to 125; these read DTPGI and NKID. The interval 122–125 is G4; the sequence is NKID. Positions 151–153 are G5; sequence ISA. The KH type-2 domain maps to 203-280; sequence TSEEIPHAIG…YLELWVKVQR (78 aa).

Belongs to the TRAFAC class TrmE-Era-EngA-EngB-Septin-like GTPase superfamily. Era GTPase family. As to quaternary structure, monomer.

It localises to the cytoplasm. The protein localises to the cell membrane. Functionally, an essential GTPase that binds both GDP and GTP, with rapid nucleotide exchange. Plays a role in 16S rRNA processing and 30S ribosomal subunit biogenesis and possibly also in cell cycle regulation and energy metabolism. This is GTPase Era from Staphylococcus epidermidis (strain ATCC 35984 / DSM 28319 / BCRC 17069 / CCUG 31568 / BM 3577 / RP62A).